Consider the following 60-residue polypeptide: Ixodegrin-like peptide (60 aa).

An N-terminal signal peptide occupies residues M1–A21. The Cell attachment site motif lies at R49–D51.

It belongs to the ixodegrin family. In terms of processing, contains 3 disulfide bonds. Expressed in salivary glands.

The protein resides in the secreted. In terms of biological role, tick salivary platelet aggregation inhibitor that plays an important part in the anti-hemostatic strategy of ticks. Inhibits platelet aggregation induced by ADP, thrombin and thromboxane A2 (TXA2). Blocks platelet adhesion to soluble collagen (most probably through the binding to alpha-2/beta-1 integrin (ITGA2/ITGB1)) and binds to purified glycoprotein IIb/IIIa (ITGA2B/ITGB3) in a dose-dependent manner. In vivo, reduces thrombus weight effectively in a rat arteriovenous shunt model and inhibits thrombosis in a carrageenan-induced mouse tail thrombosis model. The protein is Ixodegrin-like peptide of Ixodes scapularis (Black-legged tick).